Reading from the N-terminus, the 804-residue chain is Pentatricopeptide repeat-containing protein At4g35130, chloroplastic (804 aa).

Residues 1–19 (MAATLLSQCYRIYNSDACK) constitute a chloroplast transit peptide. PPR repeat units follow at residues 63-93 (NDPA…MNKA), 94-128 (DAFL…GVKA), 129-163 (DTFT…GFVS), 164-194 (DVYV…MPER), 195-229 (DIVS…GFKP), 230-264 (DRFS…RIET), 266-296 (DVMV…MIQR), 297-332 (NIVA…GLQP), 333-363 (DVIT…GFLP), 364-394 (HMVL…MAEK), 395-429 (NVIS…SLVP), 430-464 (DSTT…RYWS), 465-495 (NTII…ILLK), 496-530 (DVVS…RVNP), 531-561 (NKST…MKRE), and 567-597 (GIEH…MPFV). The segment at 602-677 (IWGSLLNASR…TSSRSTVEAK (76 aa)) is type E motif. The tract at residues 678 to 708 (GKSHVFTNGDRSHVATNKIYEVLDVVSRMVG) is type E(+) motif. The segment at 710-804 (EDIYVHCVSR…NGRCSCGNYW (95 aa)) is type DYW motif.

It belongs to the PPR family. PCMP-H subfamily.

The protein localises to the plastid. Its subcellular location is the chloroplast. The polypeptide is Pentatricopeptide repeat-containing protein At4g35130, chloroplastic (PCMP-H27) (Arabidopsis thaliana (Mouse-ear cress)).